The sequence spans 289 residues: Shikimate dehydrogenase (NADP(+)) (289 aa).

Shikimate contacts are provided by residues 20–22 and Ser-67; that span reads SIS. Residue Lys-71 is the Proton acceptor of the active site. An NADP(+)-binding site is contributed by Asp-83. 2 residues coordinate shikimate: Asn-92 and Asp-107. Residues 132-136 and Val-230 each bind NADP(+); that span reads GGGGA. A shikimate-binding site is contributed by Tyr-232. NADP(+) is bound at residue Gly-253.

It belongs to the shikimate dehydrogenase family. As to quaternary structure, homodimer.

It catalyses the reaction shikimate + NADP(+) = 3-dehydroshikimate + NADPH + H(+). It functions in the pathway metabolic intermediate biosynthesis; chorismate biosynthesis; chorismate from D-erythrose 4-phosphate and phosphoenolpyruvate: step 4/7. Functionally, involved in the biosynthesis of the chorismate, which leads to the biosynthesis of aromatic amino acids. Catalyzes the reversible NADPH linked reduction of 3-dehydroshikimate (DHSA) to yield shikimate (SA). The chain is Shikimate dehydrogenase (NADP(+)) from Streptococcus suis (strain 98HAH33).